A 320-amino-acid polypeptide reads, in one-letter code: Cytochrome c biogenesis protein CcsA (320 aa).

Transmembrane regions (helical) follow at residues 14 to 34 (SFFLLFFVTFIYWGKFLYINI), 37 to 57 (ITILGEISMKIACFFITTFLL), 68 to 88 (LSNLYESSMFLSWSFTLIHLI), 97 to 117 (WLGIITAPSAMLTHGFATLSL), 143 to 163 (MMLSYSTLLCGSLLAITILII), 228 to 248 (VISLGFPLLTIGILSGAVWAN), 263 to 283 (WALITWLIFAIYLHTRMIKGW), and 289 to 309 (AIIASLGFFIVWICYLGVNLL).

The protein belongs to the CcmF/CycK/Ccl1/NrfE/CcsA family. May interact with Ccs1.

The protein localises to the plastid. Its subcellular location is the chloroplast thylakoid membrane. Required during biogenesis of c-type cytochromes (cytochrome c6 and cytochrome f) at the step of heme attachment. This chain is Cytochrome c biogenesis protein CcsA, found in Marchantia polymorpha (Common liverwort).